The following is a 506-amino-acid chain: Histidine ammonia-lyase (506 aa).

The 5-imidazolinone (Ala-Gly) cross-link spans Ala-143–Gly-145. Position 144 is a 2,3-didehydroalanine (Ser) (Ser-144).

It belongs to the PAL/histidase family. Post-translationally, contains an active site 4-methylidene-imidazol-5-one (MIO), which is formed autocatalytically by cyclization and dehydration of residues Ala-Ser-Gly.

The protein resides in the cytoplasm. The enzyme catalyses L-histidine = trans-urocanate + NH4(+). The protein operates within amino-acid degradation; L-histidine degradation into L-glutamate; N-formimidoyl-L-glutamate from L-histidine: step 1/3. The chain is Histidine ammonia-lyase from Citrobacter koseri (strain ATCC BAA-895 / CDC 4225-83 / SGSC4696).